Reading from the N-terminus, the 527-residue chain is Probable bifunctional tRNA threonylcarbamoyladenosine biosynthesis protein (527 aa).

Positions M1–W323 are kae1. Residues H110, H114, and Y131 each contribute to the Fe cation site. L-threonylcarbamoyladenylate-binding positions include Y131 to A135, D163, G176, E180, and N256. D284 is a binding site for Fe cation. A Protein kinase domain is found at I333–L527. Residues V340–V348 and K357 each bind ATP. D444 serves as the catalytic Proton acceptor; for kinase activity.

This sequence in the N-terminal section; belongs to the KAE1 / TsaD family. The protein in the C-terminal section; belongs to the protein kinase superfamily. Tyr protein kinase family. BUD32 subfamily. As to quaternary structure, component of the KEOPS complex that consists of Kae1, Bud32, Cgi121 and Pcc1; the whole complex dimerizes. Fe(2+) is required as a cofactor.

Its subcellular location is the cytoplasm. The enzyme catalyses L-seryl-[protein] + ATP = O-phospho-L-seryl-[protein] + ADP + H(+). The catalysed reaction is L-threonyl-[protein] + ATP = O-phospho-L-threonyl-[protein] + ADP + H(+). It carries out the reaction L-threonylcarbamoyladenylate + adenosine(37) in tRNA = N(6)-L-threonylcarbamoyladenosine(37) in tRNA + AMP + H(+). Functionally, required for the formation of a threonylcarbamoyl group on adenosine at position 37 (t(6)A37) in tRNAs that read codons beginning with adenine. Is a component of the KEOPS complex that is probably involved in the transfer of the threonylcarbamoyl moiety of threonylcarbamoyl-AMP (TC-AMP) to the N6 group of A37. The Kae1 domain likely plays a direct catalytic role in this reaction. The Bud32 domain probably displays kinase activity that regulates Kae1 function. This is Probable bifunctional tRNA threonylcarbamoyladenosine biosynthesis protein from Methanoculleus marisnigri (strain ATCC 35101 / DSM 1498 / JR1).